The chain runs to 228 residues: Ribulose-phosphate 3-epimerase (228 aa).

Ser-12 provides a ligand contact to substrate. Residues His-37, Asp-39, and His-70 each contribute to the a divalent metal cation site. Asp-39 functions as the Proton acceptor in the catalytic mechanism. Substrate-binding positions include His-70, 146–149 (GFGG), 176–178 (DGG), and 198–199 (GS). Residue Asp-176 coordinates a divalent metal cation. Asp-176 serves as the catalytic Proton donor.

It belongs to the ribulose-phosphate 3-epimerase family. It depends on a divalent metal cation as a cofactor.

The catalysed reaction is D-ribulose 5-phosphate = D-xylulose 5-phosphate. Its pathway is carbohydrate degradation. Functionally, catalyzes the reversible epimerization of D-ribulose 5-phosphate to D-xylulose 5-phosphate. This chain is Ribulose-phosphate 3-epimerase, found in Rhodobacter capsulatus (Rhodopseudomonas capsulata).